Reading from the N-terminus, the 151-residue chain is uncharacterized protein (151 aa).

[4Fe-4S] cluster is bound by residues Cys24, Cys27, Cys92, and Cys129.

Belongs to the complex I 20 kDa subunit family. The cofactor is [4Fe-4S] cluster.

This is an uncharacterized protein from Methanocaldococcus jannaschii (strain ATCC 43067 / DSM 2661 / JAL-1 / JCM 10045 / NBRC 100440) (Methanococcus jannaschii).